The primary structure comprises 226 residues: 2,3-bisphosphoglycerate-dependent phosphoglycerate mutase (226 aa).

Residues 8 to 15 (RHGQSQWN), 21 to 22 (TG), Arg-58, 112 to 115 (ERMY), Lys-123, 139 to 140 (RR), and 183 to 184 (GN) contribute to the substrate site. The active-site Tele-phosphohistidine intermediate is His-9. The Proton donor/acceptor role is filled by Glu-112.

The protein belongs to the phosphoglycerate mutase family. BPG-dependent PGAM subfamily.

The enzyme catalyses (2R)-2-phosphoglycerate = (2R)-3-phosphoglycerate. The protein operates within carbohydrate degradation; glycolysis; pyruvate from D-glyceraldehyde 3-phosphate: step 3/5. In terms of biological role, catalyzes the interconversion of 2-phosphoglycerate and 3-phosphoglycerate. This Protochlamydia amoebophila (strain UWE25) protein is 2,3-bisphosphoglycerate-dependent phosphoglycerate mutase.